A 182-amino-acid polypeptide reads, in one-letter code: MSGRTVPHAHPATAEYEFANPSRLGEQRFGEGLLPEEILTPTLYHGYYVRPRAARAGEGARAGASELRLSEGKFQAFLDVSHFTPDEVTVRTVDNLLEVSARHPQRLDRHGFVSREFCRTYVLPADVDPWRVRAALSHDGILNLEAPRGGRHLDTEVNEVYISLLPAPPDPEEEEEIARVEP.

One can recognise a sHSP domain in the interval 55 to 163; sequence RAGEGARAGA…DTEVNEVYIS (109 aa).

This sequence belongs to the small heat shock protein (HSP20) family. As to quaternary structure, interacts with DMPK; may enhance its kinase activity.

Its subcellular location is the cytoplasm. It localises to the nucleus. In terms of biological role, may regulate the kinase DMPK. The protein is Heat shock protein beta-2 (Hspb2) of Mus musculus (Mouse).